The chain runs to 355 residues: 3-dehydroquinate synthase (355 aa).

NAD(+) contacts are provided by residues 98–102 (GVIGD), 122–123 (TT), Lys-135, Lys-144, and 162–165 (TLNT). Zn(2+)-binding residues include Glu-177, His-240, and His-257.

Belongs to the sugar phosphate cyclases superfamily. Dehydroquinate synthase family. The cofactor is Co(2+). It depends on Zn(2+) as a cofactor. NAD(+) is required as a cofactor.

It localises to the cytoplasm. The enzyme catalyses 7-phospho-2-dehydro-3-deoxy-D-arabino-heptonate = 3-dehydroquinate + phosphate. It functions in the pathway metabolic intermediate biosynthesis; chorismate biosynthesis; chorismate from D-erythrose 4-phosphate and phosphoenolpyruvate: step 2/7. Functionally, catalyzes the conversion of 3-deoxy-D-arabino-heptulosonate 7-phosphate (DAHP) to dehydroquinate (DHQ). The protein is 3-dehydroquinate synthase of Dictyoglomus thermophilum (strain ATCC 35947 / DSM 3960 / H-6-12).